A 313-amino-acid chain; its full sequence is tRNA dimethylallyltransferase (313 aa).

Position 9 to 16 (Gly-9 to Thr-16) interacts with ATP. Thr-11–Thr-16 contributes to the substrate binding site. An interaction with substrate tRNA region spans residues Asp-34 to Gln-37.

It belongs to the IPP transferase family. Monomer. The cofactor is Mg(2+).

The catalysed reaction is adenosine(37) in tRNA + dimethylallyl diphosphate = N(6)-dimethylallyladenosine(37) in tRNA + diphosphate. In terms of biological role, catalyzes the transfer of a dimethylallyl group onto the adenine at position 37 in tRNAs that read codons beginning with uridine, leading to the formation of N6-(dimethylallyl)adenosine (i(6)A). The sequence is that of tRNA dimethylallyltransferase from Lachnoclostridium phytofermentans (strain ATCC 700394 / DSM 18823 / ISDg) (Clostridium phytofermentans).